A 1583-amino-acid polypeptide reads, in one-letter code: Mediator of RNA polymerase II transcription subunit 12 (1583 aa).

Disordered regions lie at residues 1-117 and 1481-1525; these read MIPH…SLSW and SNIP…SGIP. A compositionally biased stretch (basic and acidic residues) spans 66–79; that stretch reads DTSEREPPSKRLRL. Composition is skewed to low complexity over residues 102-114 and 1490-1514; these read TPST…KPSS and PSPA…GSST.

It belongs to the Mediator complex subunit 12 family. In terms of assembly, component of the srb8-11 complex, which itself associates with the Mediator complex.

The protein localises to the nucleus. Component of the srb8-11 complex. The srb8-11 complex is a regulatory module of the Mediator complex which is itself involved in regulation of basal and activated RNA polymerase II-dependent transcription. The srb8-11 complex may be involved in the transcriptional repression of a subset of genes regulated by Mediator. It may inhibit the association of the Mediator complex with RNA polymerase II to form the holoenzyme complex. The protein is Mediator of RNA polymerase II transcription subunit 12 (srb8) of Aspergillus terreus (strain NIH 2624 / FGSC A1156).